A 529-amino-acid polypeptide reads, in one-letter code: Peptide chain release factor 3 (529 aa).

Residues 11–280 (AKRRTFAIIS…GLVEWAPAPM (270 aa)) enclose the tr-type G domain. GTP-binding positions include 20-27 (SHPDAGKT), 88-92 (DTPGH), and 142-145 (NKLD).

Belongs to the TRAFAC class translation factor GTPase superfamily. Classic translation factor GTPase family. PrfC subfamily.

It localises to the cytoplasm. Functionally, increases the formation of ribosomal termination complexes and stimulates activities of RF-1 and RF-2. It binds guanine nucleotides and has strong preference for UGA stop codons. It may interact directly with the ribosome. The stimulation of RF-1 and RF-2 is significantly reduced by GTP and GDP, but not by GMP. The polypeptide is Peptide chain release factor 3 (Escherichia coli O8 (strain IAI1)).